A 374-amino-acid chain; its full sequence is tRNA-specific 2-thiouridylase MnmA (374 aa).

ATP-binding positions include 12-19 (GMSGGVDS) and M38. The tract at residues 98 to 100 (NPD) is interaction with target base in tRNA. C103 functions as the Nucleophile in the catalytic mechanism. The cysteines at positions 103 and 207 are disulfide-linked. Residue G128 participates in ATP binding. The tract at residues 157–159 (KDQ) is interaction with tRNA. C207 acts as the Cysteine persulfide intermediate in catalysis. Residues 321–322 (RY) are interaction with tRNA.

This sequence belongs to the MnmA/TRMU family.

It is found in the cytoplasm. The catalysed reaction is S-sulfanyl-L-cysteinyl-[protein] + uridine(34) in tRNA + AH2 + ATP = 2-thiouridine(34) in tRNA + L-cysteinyl-[protein] + A + AMP + diphosphate + H(+). Functionally, catalyzes the 2-thiolation of uridine at the wobble position (U34) of tRNA, leading to the formation of s(2)U34. The sequence is that of tRNA-specific 2-thiouridylase MnmA from Aliivibrio fischeri (strain MJ11) (Vibrio fischeri).